The chain runs to 1082 residues: MSAAPAYSEDKGGSAGPGEPEYGHDPASGGIFSSDYKRHDDLKEMLDTNKDSLKLEAMKRIVAMIARGKNASDLFPAVVKNVACKNIEVKKLVYVYLVRYAEEQQDLALLSISTFQRGLKDPNQLIRASALRVLSSIRVPIIVPIMMLAIKEAASDMSPYVRKTAAHAIPKLYSLDSDQKDQLIEVIEKLLADKTTLVAGSVVMAFEEVCPERIDLIHKNYRKLCNLLIDVEEWGQVVIISMLTRYARTQFLSPTQNESLLEENPEKAFYGSEEDEAKGPGSEEAATAALPARKPYVMDPDHRLLLRNTKPLLQSRSAAVVMAVAQLYFHLAPKAEVGVIAKALVRLLRSHSEVQYVVLQNVATMSIKRRGMFEPYLKSFYIRSTDPTQIKILKLEVLTNLANETNIPTVLREFQTYIRSMDKDFVAATIQAIGRCATNIGRVRDTCLNGLVQLLSNRDELVVAESVVVIKKLLQMQPAQHGEIIKHLAKLTDNIQVPMARASILWLIGEYCEHVPKIAPDVLRKMAKSFTAEEDIVKLQVINLAAKLYLTNSKQTKLLTQYVLSLAKYDQNYDIRDRARFTRQLIVPSEQGGALSRHAKKLFLAPKPAPILESSFKDRDHFQLGSLSHLLNAKATGYQELPDWPEEAPDPSVRNVEVPEWTKCSNREKRKEKEKPFYSDSEGESGPTESADSEPESESESESKSSSGSGSGESSSESDNEEEDEEKGGGSESEQSEEEDEKKKKTKKKKASEGHREGSSSEEGSDSSSSSESEVTSESEEEQVEPASWRKKTPPGSKSAPVAKEISLLDLEDFTPPSVQPVSPPMVVSTSLAADLEGLTLTDSSLVPSLLSPVSSIGRQELLHRVAGEGLSVDYAFSRQPFSGDPHMVSLHIYFSNNSETPIKGLHVGTPKLPAGISIQEFPEIESLAPGESTTTVMGINFCDSTQAANFQLCTQTRQFYVSIQPPVGELMAPVFMSENEFKKEQGKLTGMNEITEKLTLPDTCRSDHMVVQKVTATANLGRVPCGTSDEYRFAGRTLTSGSLVLLTLDARAAGAAQLTVNSEKMVIGTMLVKDVIQALTQ.

Residues 1–30 are disordered; that stretch reads MSAAPAYSEDKGGSAGPGEPEYGHDPASGG. Phosphoserine is present on residues Ser-272 and Ser-282. A compositionally biased stretch (basic and acidic residues) spans 666–677; that stretch reads NREKRKEKEKPF. Residues 666 to 801 form a disordered region; that stretch reads NREKRKEKEK…KTPPGSKSAP (136 aa). The span at 691 to 700 shows a compositional bias: acidic residues; the sequence is ADSEPESESE. Low complexity predominate over residues 704–715; the sequence is KSSSGSGSGESS. Acidic residues-rich tracts occupy residues 716–726 and 775–784; these read SESDNEEEDEE and VTSESEEEQV.

This sequence belongs to the adaptor complexes large subunit family. In terms of assembly, adaptor protein complex 3 (AP-3) is a heterotetramer composed of two large adaptins (delta-type subunit AP3D1 and beta-type subunit AP3B1 or AP3B2), a medium adaptin (mu-type subunit AP3M1 or AP3M2) and a small adaptin (sigma-type subunit APS1 or AP3S2). AP-3 associates with the BLOC-1 complex.

The protein localises to the cytoplasmic vesicle. The protein resides in the clathrin-coated vesicle membrane. Its subcellular location is the golgi apparatus. Its function is as follows. Subunit of non-clathrin- and clathrin-associated adaptor protein complex 3 (AP-3) that plays a role in protein sorting in the late-Golgi/trans-Golgi network (TGN) and/or endosomes. The AP complexes mediate both the recruitment of clathrin to membranes and the recognition of sorting signals within the cytosolic tails of transmembrane cargo molecules. AP-3 appears to be involved in the sorting of a subset of transmembrane proteins targeted to lysosomes and lysosome-related organelles. In concert with the BLOC-1 complex, AP-3 is required to target cargos into vesicles assembled at cell bodies for delivery into neurites and nerve terminals. The sequence is that of AP-3 complex subunit beta-2 (Ap3b2) from Mus musculus (Mouse).